A 154-amino-acid polypeptide reads, in one-letter code: MSKRQRGKGISIFKLLSRIWIPLVILVVLVVGGFVVYRVHSYFASEKRESYADSNLGSSKPFNPKQIVYEVFGPPGTVADISYFDANSDPQRIDGAQLPWSLLMTTTLAAVMGNLVAQGNTDSIGCRIIVDGVVKAERVSNEVNAYTYCLVKSA.

Transmembrane regions (helical) follow at residues 19–39 (IWIP…VYRV) and 97–117 (QLPW…NLVA).

Belongs to the MmpS family.

Its subcellular location is the cell membrane. The polypeptide is Probable transport accessory protein MmpS4 (Mycobacterium leprae (strain TN)).